The following is a 612-amino-acid chain: Proton channel OTOP1 (612 aa).

Residues 1 to 46 (MLEGLGSPASPRAAASASVAGSSGPAACSPPSSSAPRSPESPAPRR) show a composition bias toward low complexity. Residues 1-50 (MLEGLGSPASPRAAASASVAGSSGPAACSPPSSSAPRSPESPAPRRGGVR) form a disordered region. Topologically, residues 1–58 (MLEGLGSPASPRAAASASVAGSSGPAACSPPSSSAPRSPESPAPRRGGVRASVPQKLA) are cytoplasmic. A helical transmembrane segment spans residues 59–80 (EMLSSQYGLIVFVAGLLLLLAW). The Extracellular portion of the chain corresponds to 81-88 (AVHAAGVS). The helical transmembrane segment at 89–112 (KSDLLCFLTALMLLQLLWMLWYVG) threads the bilayer. Topologically, residues 113-130 (RSSAHRRLFRLKDTHAGA) are cytoplasmic. The helical transmembrane segment at 131 to 153 (GWLRGSITLFAVITVILGCLKIG) threads the bilayer. The Extracellular segment spans residues 154–163 (YFIGFSECLS). The helical transmembrane segment at 164–188 (ATEGVFPVTHSVHTLLQVYFLWGHA) threads the bilayer. Residues 189–196 (KDIIQSFK) are Cytoplasmic-facing. Residues 197–223 (TLERFGVIHSVFTNLLLWANGVLNESK) traverse the membrane as a helical segment. The Extracellular segment spans residues 224 to 264 (HQLNEHKERLITLGFGNITTVLDDHTPQCNCTPPTLCTAIS). Residues 265-290 (HGIYYLYPFNIEYQILASTMLYVLWK) traverse the membrane as a helical segment. At 291–311 (NIGRKVDSHQHQKMQFKSDGV) the chain is on the cytoplasmic side. A helical membrane pass occupies residues 312–334 (MVGAVLGLTVLAATIAVVVVYLI). Over 335–344 (HIGRSKTKSE) the chain is Extracellular. A helical membrane pass occupies residues 345 to 370 (SALIMFYLYAITLLMLMGAAGLAGIR). The Cytoplasmic portion of the chain corresponds to 371 to 388 (IYRIDEKSLDESKNPARK). Residues 389-413 (LDSDLLVGTASGSWLISWGSILAIL) form a helical membrane-spanning segment. Residues 414 to 423 (CAEGHPRYTW) are Extracellular-facing. The helical transmembrane segment at 424–444 (YNLPYSILAIVEKYIQNLFIF) threads the bilayer. Residues 445 to 544 (ESIHREPEKL…QGNAKRKVLR (100 aa)) lie on the Cytoplasmic side of the membrane. The segment at 499–525 (ANGNVCMRESHDKEEEKQEESSWGGSP) is disordered. The span at 506-518 (RESHDKEEEKQEE) shows a compositional bias: basic and acidic residues. Residues 545–563 (NIAAFLFLCNISLWIPPAF) traverse the membrane as a helical segment. Topologically, residues 564 to 581 (GCRPEYDNGLEEIVFGFE) are extracellular. The helical transmembrane segment at 582-605 (PWIIVVNLAMPFSIFYRMHAAASL) threads the bilayer. Residues 606–612 (FEVYCKI) lie on the Cytoplasmic side of the membrane.

The protein belongs to the otopetrin family. Homodimer. Interacts with STAT1, independently of STAT1 phosphorylation status.

The protein localises to the cell membrane. The protein resides in the cell projection. It localises to the microvillus. The catalysed reaction is H(+)(in) = H(+)(out). Activated by both acid and alkali, with proton influx in response to extracellular acid and proton efflux during alkali stimulation. Inhibited by Zn(2+); this inhibition is thought to be pH-sensitive. Currents evoked in response to mild acid (pH 6.0) stimulus may also be mildly potentiated by exposure to Zn(2+). Activated by NH(4)Cl. Its function is as follows. Proton-selective ion channel. Biphasically modulated by acid and alkali, mediating proton influx and efflux in response to extracellular acid and base stimulation, respectively. Sour taste receptor, which carries inward currents in response to extracellular acidification. Sensor for ammonium chloride (NH(4)Cl) in taste receptor cells. NH(4)Cl acts by increasing the intracellular pH, thereby generating a driving force for proton entry through OTOP1 channel. Might also participate in alkaline sensation. Plays a role in the regulation of Ca(2+) flux in response to purigenic (ATP, ADP and UDP) stimuli, leading to increase in cytosolic Ca(2+) due to influx of extracellular calcium. May play this role by inhibiting P2Y purinoceptor-mediated Ca(2+) release in a Ca(2+)-dependent manner and promote an influx of Ca(2+) in response to ATP. Through this mechanism and possibly others, plays a role in the formation and function of calcium carbonate-based structures in the vestibular system of the inner ear, called otoconia, that sense gravity and linear acceleration. In obesity, may attenuate adipose tissue inflammation, through the negative regulation of IFNG signaling, hence may play an adaptive role in the maintainance of metabolic homeostasis. Following alkali activation, may also be permeable Na(+), K(+), Cs(+) and Li(+). In Homo sapiens (Human), this protein is Proton channel OTOP1.